A 178-amino-acid chain; its full sequence is N-alpha-acetyltransferase 20 (178 aa).

In terms of domain architecture, N-acetyltransferase spans 2 to 157 (TTLRAFTCDD…DAYDMRKALS (156 aa)).

It belongs to the acetyltransferase family. ARD1 subfamily. In terms of assembly, component of the N-terminal acetyltransferase B (NatB) complex which is composed of NAA20 and NAA25.

The protein resides in the cytoplasm. Its subcellular location is the nucleus. It carries out the reaction N-terminal L-methionyl-L-asparaginyl-[protein] + acetyl-CoA = N-terminal N(alpha)-acetyl-L-methionyl-L-asparaginyl-[protein] + CoA + H(+). The enzyme catalyses N-terminal L-methionyl-L-glutaminyl-[protein] + acetyl-CoA = N-terminal N(alpha)-acetyl-L-methionyl-L-glutaminyl-[protein] + CoA + H(+). The catalysed reaction is N-terminal L-methionyl-L-aspartyl-[protein] + acetyl-CoA = N-terminal N(alpha)-acetyl-L-methionyl-L-aspartyl-[protein] + CoA + H(+). It catalyses the reaction N-terminal L-methionyl-L-glutamyl-[protein] + acetyl-CoA = N-terminal N(alpha)-acetyl-L-methionyl-L-glutamyl-[protein] + CoA + H(+). Its function is as follows. Catalytic subunit of the NatB complex which catalyzes acetylation of the N-terminal methionine residues of peptides beginning with Met-Asp, Met-Glu, Met-Asn and Met-Gln. Proteins with cell cycle functions are overrepresented in the pool of NatB substrates. Required for maintaining the structure and function of actomyosin fibers and for proper cellular migration. The chain is N-alpha-acetyltransferase 20 (NAA20) from Homo sapiens (Human).